We begin with the raw amino-acid sequence, 160 residues long: Transcription elongation factor GreA (160 aa).

A coiled-coil region spans residues 10 to 37 (TLDGKAKLENELQELKTVKRKEVVERIK).

It belongs to the GreA/GreB family.

In terms of biological role, necessary for efficient RNA polymerase transcription elongation past template-encoded arresting sites. The arresting sites in DNA have the property of trapping a certain fraction of elongating RNA polymerases that pass through, resulting in locked ternary complexes. Cleavage of the nascent transcript by cleavage factors such as GreA or GreB allows the resumption of elongation from the new 3'terminus. GreA releases sequences of 2 to 3 nucleotides. The protein is Transcription elongation factor GreA of Listeria innocua serovar 6a (strain ATCC BAA-680 / CLIP 11262).